A 169-amino-acid polypeptide reads, in one-letter code: Photosystem I assembly protein Ycf3 (169 aa).

TPR repeat units follow at residues 35-68 (AFTY…EIDP), 72-105 (SYIL…NPSL), and 120-153 (GEQA…APGN).

This sequence belongs to the Ycf3 family.

It localises to the plastid. It is found in the chloroplast thylakoid membrane. Its function is as follows. Essential for the assembly of the photosystem I (PSI) complex. May act as a chaperone-like factor to guide the assembly of the PSI subunits. This is Photosystem I assembly protein Ycf3 from Huperzia lucidula (Shining clubmoss).